Consider the following 139-residue polypeptide: Ribosome-binding factor A (139 aa).

The protein belongs to the RbfA family. Monomer. Binds 30S ribosomal subunits, but not 50S ribosomal subunits or 70S ribosomes.

The protein resides in the cytoplasm. In terms of biological role, one of several proteins that assist in the late maturation steps of the functional core of the 30S ribosomal subunit. Associates with free 30S ribosomal subunits (but not with 30S subunits that are part of 70S ribosomes or polysomes). Required for efficient processing of 16S rRNA. May interact with the 5'-terminal helix region of 16S rRNA. This Methylobacterium sp. (strain 4-46) protein is Ribosome-binding factor A.